The primary structure comprises 409 residues: Serine hydroxymethyltransferase (409 aa).

(6S)-5,6,7,8-tetrahydrofolate-binding positions include Leu-116 and 120–122 (GHL). Position 225 is an N6-(pyridoxal phosphate)lysine (Lys-225).

Belongs to the SHMT family. In terms of assembly, homodimer. Pyridoxal 5'-phosphate serves as cofactor.

It is found in the cytoplasm. The catalysed reaction is (6R)-5,10-methylene-5,6,7,8-tetrahydrofolate + glycine + H2O = (6S)-5,6,7,8-tetrahydrofolate + L-serine. It participates in one-carbon metabolism; tetrahydrofolate interconversion. The protein operates within amino-acid biosynthesis; glycine biosynthesis; glycine from L-serine: step 1/1. Catalyzes the reversible interconversion of serine and glycine with tetrahydrofolate (THF) serving as the one-carbon carrier. This reaction serves as the major source of one-carbon groups required for the biosynthesis of purines, thymidylate, methionine, and other important biomolecules. Also exhibits THF-independent aldolase activity toward beta-hydroxyamino acids, producing glycine and aldehydes, via a retro-aldol mechanism. The sequence is that of Serine hydroxymethyltransferase from Acholeplasma laidlawii (strain PG-8A).